We begin with the raw amino-acid sequence, 529 residues long: MSSRLEREAARRRTFAIISHPDAGKTTLTEKLLLFGGAIQMAGSVKARKAARHATSDWMAMERERGISVTTSVMQFPYRDRVVNLLDTPGHQDFSEDTYRVLTAVDSALVVIDAAKGVEAQTRKLMDVCRMRATPVMTFVNKMDREALHPLDVMADIEQHLQIECAPMTWPIGMGSSFKGTYDLLHKQLHLFSATHGGRIQSGIVIHGADDPQLDEYLGDQAEQLRMDLALLEEAGTPFDEERYLKGELTPVFFGSAINNFGVREMLDMFVEFAPGPQPRPAATRVVEPGEEAFTGVVFKIQANMDKAHRDRMAFLRICSGTFTRGMRLKHHRTGKDVTVANATIFMAQDRTGVEEAFPGDIIGIPNHGTIKIGDTFTESKEVLKFVGIPNFAPEHFRRVRLKNPLKAKQLQKGLEQLAEEGAVQLFRPLVNNDYILGAVGVLQFDVIVARLADEYGVDAVYEGVSTHTARWVYCEDKKIFADFQDYHRGELAVDAEGALAYLAPNPWRLESAMERYPKVEFRTTREIS.

The tr-type G domain maps to 10 to 278 (ARRRTFAIIS…MFVEFAPGPQ (269 aa)). GTP-binding positions include 19-26 (SHPDAGKT), 87-91 (DTPGH), and 141-144 (NKMD).

Belongs to the TRAFAC class translation factor GTPase superfamily. Classic translation factor GTPase family. PrfC subfamily.

It is found in the cytoplasm. In terms of biological role, increases the formation of ribosomal termination complexes and stimulates activities of RF-1 and RF-2. It binds guanine nucleotides and has strong preference for UGA stop codons. It may interact directly with the ribosome. The stimulation of RF-1 and RF-2 is significantly reduced by GTP and GDP, but not by GMP. The polypeptide is Peptide chain release factor 3 (Nitratidesulfovibrio vulgaris (strain DSM 19637 / Miyazaki F) (Desulfovibrio vulgaris)).